Reading from the N-terminus, the 283-residue chain is Protein-L-isoaspartate O-methyltransferase (283 aa).

Serine 122 is an active-site residue.

The protein belongs to the methyltransferase superfamily. L-isoaspartyl/D-aspartyl protein methyltransferase family.

It is found in the cytoplasm. The enzyme catalyses [protein]-L-isoaspartate + S-adenosyl-L-methionine = [protein]-L-isoaspartate alpha-methyl ester + S-adenosyl-L-homocysteine. In terms of biological role, catalyzes the methyl esterification of L-isoaspartyl residues in peptides and proteins that result from spontaneous decomposition of normal L-aspartyl and L-asparaginyl residues. It plays a role in the repair and/or degradation of damaged proteins. The protein is Protein-L-isoaspartate O-methyltransferase of Leptothrix cholodnii (strain ATCC 51168 / LMG 8142 / SP-6) (Leptothrix discophora (strain SP-6)).